A 950-amino-acid polypeptide reads, in one-letter code: Leucine--tRNA ligase (950 aa).

The 'HIGH' region signature appears at 42 to 52; sequence PYLNGNLHAGH. Positions 629 to 633 match the 'KMSKS' region motif; it reads KMSKS. Residue lysine 632 participates in ATP binding. A disordered region spans residues 928–950; it reads NPPYDPKGRAQNAEPGRPAIYIE.

This sequence belongs to the class-I aminoacyl-tRNA synthetase family.

Its subcellular location is the cytoplasm. It carries out the reaction tRNA(Leu) + L-leucine + ATP = L-leucyl-tRNA(Leu) + AMP + diphosphate. The protein is Leucine--tRNA ligase of Methanothrix thermoacetophila (strain DSM 6194 / JCM 14653 / NBRC 101360 / PT) (Methanosaeta thermophila).